We begin with the raw amino-acid sequence, 192 residues long: DNA dC-&gt;dU-editing enzyme APOBEC-3Ca (192 aa).

The CMP/dCMP-type deaminase domain occupies 15-141 (IDPNTFRFHF…PNYQEGLCKL (127 aa)). Histidine 69 provides a ligand contact to Zn(2+). Glutamate 71 serves as the catalytic Proton donor. Positions 100 and 103 each coordinate Zn(2+).

Belongs to the cytidine and deoxycytidylate deaminase family. (Microbial infection) Interacts with feline foamy virus protein Bet. This interaction does not induce APOBEC3Ca degradation but prevents its dimerization and incorporation into the virion. It depends on Zn(2+) as a cofactor.

It localises to the nucleus. The protein localises to the cytoplasm. The enzyme catalyses a 2'-deoxycytidine in single-stranded DNA + H2O + H(+) = a 2'-deoxyuridine in single-stranded DNA + NH4(+). DNA deaminase (cytidine deaminase) which acts as an inhibitor of retrovirus replication and retrotransposon mobility via deaminase-dependent and -independent mechanisms. Selectively targets single-stranded DNA and does not deaminate double-stranded DNA or single- or double-stranded RNA. Does not reduce infectivity of foamy feline virus, feline immunodeficiency virus or feline leukemia virus. In Felis catus (Cat), this protein is DNA dC-&gt;dU-editing enzyme APOBEC-3Ca.